A 520-amino-acid chain; its full sequence is MSIKDEIESRKTFAIISHPDAGKTTLTEKLLLFGGAIREAGTVKGKKSGKFATSDWMKVEQERGISVTSSVMQFDYDDYNINILDTPGHEDFSEDTYRTLMAVDSAVMVIDCAKGIEPQTLKLFKVCKMRGIPIFTFINKLDRVGKEPFELLDEIEETLNIKTYPMNWPVGMGQNFFGIIDREQRTIEPFRDEEHLLHLNDDYELEEEHEITKDSTFSQAIDEFMLVEEAGEEFDNEMLLAGELTPVFFGSALANFGVQSFLNAYVDHAPMPNGRITKEAEEVSPFTPDFSGFIFKIQANMDPKHRDRIAFMRIVSGAFERGMDVKLQRTNKKQKITRSTSFMADDKETVNHAVAGDIIGLYDTGNYQIGDTLVGGNQKFSFEDLPQFTPELFMKVSAKNVMKQKHFHKGIEQLVQEGAIQYYKTLHTNQIILGAVGQLQFEVFEHRMKNEYNVDVVMEPVGRKIARWVENEDDIKDKMSTSRSILVQDRYEQKVFLFENEFATRWFEEKFPEIKLYSLL.

A tr-type G domain is found at 8-273 (ESRKTFAIIS…AYVDHAPMPN (266 aa)). GTP-binding positions include 17–24 (SHPDAGKT), 85–89 (DTPGH), and 139–142 (NKLD).

This sequence belongs to the TRAFAC class translation factor GTPase superfamily. Classic translation factor GTPase family. PrfC subfamily.

The protein resides in the cytoplasm. Functionally, increases the formation of ribosomal termination complexes and stimulates activities of RF-1 and RF-2. It binds guanine nucleotides and has strong preference for UGA stop codons. It may interact directly with the ribosome. The stimulation of RF-1 and RF-2 is significantly reduced by GTP and GDP, but not by GMP. The chain is Peptide chain release factor 3 from Staphylococcus carnosus (strain TM300).